A 346-amino-acid chain; its full sequence is Peripherin-2 (346 aa).

The Cytoplasmic segment spans residues 1 to 24 (MALLKVKFDQKKRVKLAQGLWLMN). A helical transmembrane segment spans residues 25 to 43 (WLSVLAGIVIFSLGLFLKI). At 44 to 61 (ELRKRSDVMNNSESHFVP) the chain is on the lumenal side. Asn-53 carries an N-linked (GlcNAc...) asparagine glycan. A helical membrane pass occupies residues 62-80 (NSLIVMGVLSCVFNSLAGK). The Cytoplasmic portion of the chain corresponds to 81–99 (ICYDALDPAKYAKWKPWLK). A helical membrane pass occupies residues 100–123 (PYLAVCVLFNIALFLVTLCCFLMR). At 124-264 (GSLESTLAHG…LSYYSSLMNS (141 aa)) the chain is on the lumenal side. N-linked (GlcNAc...) asparagine glycosylation is present at Asn-229. Residues 265 to 290 (MGAVTLLVWLFEVTITIGLRYLHTAL) form a helical membrane-spanning segment. Residues 291-346 (EGVSNPEDPECESEGWLLEKSVSETWKAFLESLKKLGKSNQVEAEGADAGQAPEAG) lie on the Cytoplasmic side of the membrane. The tract at residues 341–346 (QAPEAG) is interaction with MREG.

The protein belongs to the PRPH2/ROM1 family. Homodimer; disulfide-linked. Forms a homotetramer. Forms a heterotetramer with ROM1. Homotetramer and heterotetramer core complexes go on to form higher order complexes by formation of intermolecular disulfide bonds. Interacts with MREG. Interacts with STX3. Interacts with SNAP25. Retina (photoreceptor). In rim region of ROS (rod outer segment) disks.

The protein localises to the membrane. It localises to the cell projection. Its subcellular location is the cilium. The protein resides in the photoreceptor outer segment. It is found in the photoreceptor inner segment. Functionally, essential for retina photoreceptor outer segment disk morphogenesis, may also play a role with ROM1 in the maintenance of outer segment disk structure. Required for the maintenance of retinal outer nuclear layer thickness. Required for the correct development and organization of the photoreceptor inner segment. This Canis lupus familiaris (Dog) protein is Peripherin-2 (PRPH2).